A 278-amino-acid polypeptide reads, in one-letter code: MKLKFTKMQGLGNDFAVLDGVRQTIRLTPEQIRKLGDRRFGIGFDQLLLVEPPQDAGNDFSYRIFNCDGGEVEQCGNGARCFARFVFDHGLTDRREIRVETARGVIVPRLADDGLVTVDMGPPRFRPADIPFVAAEDAVIHELEVAGQILGVTVVSMGNPHAVQVVDDVDTAPVTAFGPLIENHLRFPARVNAGFMQIESRTAICLRVFERGSGETLACGTGACAAVVAGIRRGLLDADTPVTVQTRGGELRIRWAGDGHPVWMTGPAVTVFEGEITL.

Residues Asn13, Gln46, and Asn66 each coordinate substrate. Catalysis depends on Cys75, which acts as the Proton donor. Residues 76–77 (GN), Asn159, Asn192, and 210–211 (ER) contribute to the substrate site. Cys219 functions as the Proton acceptor in the catalytic mechanism. 220–221 (GT) lines the substrate pocket.

This sequence belongs to the diaminopimelate epimerase family. In terms of assembly, homodimer.

The protein resides in the cytoplasm. It catalyses the reaction (2S,6S)-2,6-diaminopimelate = meso-2,6-diaminopimelate. Its pathway is amino-acid biosynthesis; L-lysine biosynthesis via DAP pathway; DL-2,6-diaminopimelate from LL-2,6-diaminopimelate: step 1/1. Functionally, catalyzes the stereoinversion of LL-2,6-diaminopimelate (L,L-DAP) to meso-diaminopimelate (meso-DAP), a precursor of L-lysine and an essential component of the bacterial peptidoglycan. In Laribacter hongkongensis (strain HLHK9), this protein is Diaminopimelate epimerase.